Consider the following 271-residue polypeptide: Autophagy-related protein 27 (271 aa).

The N-terminal stretch at 1 to 19 is a signal peptide; sequence MVSKTWICGFISIITVVQA. Residues 20–166 form the MRH domain; it reads LSCEKHDVLK…TLKGPSGCLK (147 aa). Over 20–197 the chain is Lumenal; the sequence is LSCEKHDVLK…KKPAKKAGGT (178 aa). 3 cysteine pairs are disulfide-bonded: Cys-22-Cys-60, Cys-71-Cys-78, and Cys-135-Cys-164. The interval 161 to 190 is disordered; sequence PSGCLKSKDDDKKNGDGDNGKDGDNEGKKP. Basic and acidic residues predominate over residues 166 to 189; sequence KSKDDDKKNGDGDNGKDGDNEGKK. A helical membrane pass occupies residues 198–218; that stretch reads LWFTWLFLYALLFTLIYLMVV. The Cytoplasmic portion of the chain corresponds to 219 to 271; sequence SFLNTRGGSFQDFRAEFIQRSTQFLTSLPEFCREVVSRILGRSTAQRGGYSAV.

This sequence belongs to the ATG27 family. In terms of assembly, forms a complex with ATG9 and ATG23.

It is found in the cytoplasmic vesicle membrane. The protein resides in the golgi apparatus membrane. Its subcellular location is the mitochondrion membrane. It localises to the preautophagosomal structure membrane. Effector of VPS34 phosphatidylinositol 3-phosphate kinase signaling. Regulates the cytoplasm to vacuole transport (Cvt) vesicle formation. Plays a role in ATG protein retrieval from the pre-autophagosomal structure (PAS) and is especially required for autophagy-dependent cycling of ATG9. The chain is Autophagy-related protein 27 (ATG27) from Saccharomyces cerevisiae (strain YJM789) (Baker's yeast).